The sequence spans 266 residues: MEWFEALILGLIQGLTEYLPVSSSGHLAIGSALFGIEGEENLAFTIVVHVATVFSTLVILWKEIDWIFRGLFKFEMNSETRYVINILISMIPIGIVGVFFKDEVEAIFGSGLLIVGCMLLLTAALLSFSYYAKPRQKENISMKDAFIIGLAQACAVLPGLSRSGSTIATGLLLGDNKAKLAQFSFLMVIPPILGEALLDGMKMIKGEAIAGDIPTLSLIVGFIAAFVSGCLACKWMINIVKKGKLIYFAIYCAIVGVVTIVVSQLQ.

A run of 7 helical transmembrane segments spans residues 41-61 (NLAF…VILW), 82-102 (YVIN…FFKD), 106-126 (AIFG…AALL), 140-160 (ISMK…LPGL), 180-200 (LAQF…LLDG), 213-233 (IPTL…CLAC), and 245-265 (LIYF…VSQL).

Belongs to the UppP family.

It is found in the cell inner membrane. It catalyses the reaction di-trans,octa-cis-undecaprenyl diphosphate + H2O = di-trans,octa-cis-undecaprenyl phosphate + phosphate + H(+). In terms of biological role, catalyzes the dephosphorylation of undecaprenyl diphosphate (UPP). Confers resistance to bacitracin. This is Undecaprenyl-diphosphatase from Bacteroides fragilis (strain ATCC 25285 / DSM 2151 / CCUG 4856 / JCM 11019 / LMG 10263 / NCTC 9343 / Onslow / VPI 2553 / EN-2).